A 244-amino-acid polypeptide reads, in one-letter code: Vesicle-associated membrane protein-associated protein SCS2 (244 aa).

Ser2 bears the N-acetylserine mark. At 2 to 222 the chain is on the cytoplasmic side; that stretch reads SAVEISPDVL…EAATVPAENE (221 aa). Residues 3–126 enclose the MSP domain; the sequence is AVEISPDVLV…ISKKIKVKYL (124 aa). Residue Ser106 is modified to Phosphoserine. Positions 135 to 219 are disordered; that stretch reads QNQNIQENKE…QIKEAATVPA (85 aa). The segment covering 153 to 168 has biased composition (basic and acidic residues); it reads SEPKEVPAVVNEKEVP. The segment covering 199-211 has biased composition (polar residues); that stretch reads QTSNSTPAPQNQI. Residues 223–243 form a helical; Anchor for type IV membrane protein membrane-spanning segment; the sequence is SSSMGIFILVALLILVLGWFY. Position 244 (Arg244) is a topological domain, lumenal.

Belongs to the VAMP-associated protein (VAP) (TC 9.B.17) family. As to quaternary structure, interacts with OPI1. Also interacts with PBI1. Interacts with EPO1.

The protein localises to the endoplasmic reticulum membrane. Its subcellular location is the nucleus membrane. Acts as an endoplasmic reticulum (ER) membrane anchor for cytoplasmic proteins via binding to the FFAT motif of targeted proteins. Regulates phospholipid biosynthesis by modulating the subcellular localization of the transcriptional repressor OPI1. Also contributes to the tethering of the ER to the plasma membrane. Allows interorganelle phosphatidylserine (PtdSer) transport via a process that involves the acceptor membrane complex PDR17-PDS2 that binds to PBI1 which in turn ligates to SCS2 and phosphatidic acid present in the donor membrane, forming a zone of apposition that facilitates PtdSer transfer. The protein is Vesicle-associated membrane protein-associated protein SCS2 of Saccharomyces cerevisiae (strain ATCC 204508 / S288c) (Baker's yeast).